A 617-amino-acid polypeptide reads, in one-letter code: Vitamin B12 transporter BtuB (617 aa).

A signal peptide spans 1-22 (MRKTFLAITCASLLSPTFYSQA). The TonB box motif lies at 29 to 36 (ETVVVTAN). In terms of domain architecture, TBDR plug spans 40 to 154 (QIDGAVLAQT…ISGVINIITR (115 aa)). One can recognise a TBDR beta-barrel domain in the interval 159 to 617 (DDSGRVSAGY…QYFVSADYRF (459 aa)). The TonB C-terminal box signature appears at 600–617 (VGYVTPGRQYFVSADYRF).

Belongs to the TonB-dependent receptor family. BtuB (TC 1.B.14.3.1) subfamily.

The protein resides in the cell outer membrane. Involved in the active translocation of vitamin B12 (cyanocobalamin) across the outer membrane to the periplasmic space. It derives its energy for transport by interacting with the trans-periplasmic membrane protein TonB. The protein is Vitamin B12 transporter BtuB of Vibrio campbellii (strain ATCC BAA-1116).